The primary structure comprises 423 residues: Glucose-1-phosphate adenylyltransferase (423 aa).

Residues tyrosine 108, glycine 173, 188–189 (EK), and serine 207 contribute to the alpha-D-glucose 1-phosphate site.

It belongs to the bacterial/plant glucose-1-phosphate adenylyltransferase family. Homotetramer.

It catalyses the reaction alpha-D-glucose 1-phosphate + ATP + H(+) = ADP-alpha-D-glucose + diphosphate. It participates in glycan biosynthesis; glycogen biosynthesis. Functionally, involved in the biosynthesis of ADP-glucose, a building block required for the elongation reactions to produce glycogen. Catalyzes the reaction between ATP and alpha-D-glucose 1-phosphate (G1P) to produce pyrophosphate and ADP-Glc. The polypeptide is Glucose-1-phosphate adenylyltransferase (Francisella tularensis subsp. novicida (strain U112)).